The primary structure comprises 355 residues: UDP-N-acetylglucosamine--N-acetylmuramyl-(pentapeptide) pyrophosphoryl-undecaprenol N-acetylglucosamine transferase (355 aa).

UDP-N-acetyl-alpha-D-glucosamine is bound by residues 15-17, Asn-127, Arg-163, Ser-191, Ile-244, 263-268, and Gln-288; these read TGG and ALTVSE.

It belongs to the glycosyltransferase 28 family. MurG subfamily.

It is found in the cell inner membrane. The catalysed reaction is di-trans,octa-cis-undecaprenyl diphospho-N-acetyl-alpha-D-muramoyl-L-alanyl-D-glutamyl-meso-2,6-diaminopimeloyl-D-alanyl-D-alanine + UDP-N-acetyl-alpha-D-glucosamine = di-trans,octa-cis-undecaprenyl diphospho-[N-acetyl-alpha-D-glucosaminyl-(1-&gt;4)]-N-acetyl-alpha-D-muramoyl-L-alanyl-D-glutamyl-meso-2,6-diaminopimeloyl-D-alanyl-D-alanine + UDP + H(+). It functions in the pathway cell wall biogenesis; peptidoglycan biosynthesis. In terms of biological role, cell wall formation. Catalyzes the transfer of a GlcNAc subunit on undecaprenyl-pyrophosphoryl-MurNAc-pentapeptide (lipid intermediate I) to form undecaprenyl-pyrophosphoryl-MurNAc-(pentapeptide)GlcNAc (lipid intermediate II). The chain is UDP-N-acetylglucosamine--N-acetylmuramyl-(pentapeptide) pyrophosphoryl-undecaprenol N-acetylglucosamine transferase from Shigella flexneri serotype 5b (strain 8401).